The chain runs to 312 residues: Ribosomal RNA small subunit methyltransferase H (312 aa).

S-adenosyl-L-methionine contacts are provided by residues Gly34 to His36, Asp54, Phe81, Asp102, and Gln109.

This sequence belongs to the methyltransferase superfamily. RsmH family.

The protein resides in the cytoplasm. The catalysed reaction is cytidine(1402) in 16S rRNA + S-adenosyl-L-methionine = N(4)-methylcytidine(1402) in 16S rRNA + S-adenosyl-L-homocysteine + H(+). Specifically methylates the N4 position of cytidine in position 1402 (C1402) of 16S rRNA. This Geotalea uraniireducens (strain Rf4) (Geobacter uraniireducens) protein is Ribosomal RNA small subunit methyltransferase H.